The primary structure comprises 321 residues: G-protein coupled receptor aex-2 (321 aa).

At 1–24 (MNSTDIIANVTKPFVENLTLGETA) the chain is on the extracellular side. N-linked (GlcNAc...) asparagine glycans are attached at residues Asn2, Asn9, and Asn17. Residues 25–45 (FYISCGIVGTVFNALVLWIAL) traverse the membrane as a helical segment. The Cytoplasmic portion of the chain corresponds to 46-55 (TYINTEDKPR). The helical transmembrane segment at 56–76 (QIIVINMTVADLLMCIVYMKT) threads the bilayer. Residues 77–90 (RPWLSHFNLWLCHP) are Extracellular-facing. An intrachain disulfide couples Cys88 to Cys161. Residues 91–111 (YYVIIWTCQMCSCLNLVWLNV) traverse the membrane as a helical segment. At 112–132 (DKLIYIQFPLHYYQIVNRKRL) the chain is on the cytoplasmic side. Residues 133-153 (LWITAATWGGLYAMNIALVTF) traverse the membrane as a helical segment. Residues 154 to 175 (LKITRGSCLGVSLNPYVYLLSP) lie on the Extracellular side of the membrane. Residues 176–196 (IFYVVMILTSFSLSALIYCIA) form a helical membrane-spanning segment. Residues 197–221 (HNLTHMEERQRSKLFRRLFFLFSST) lie on the Cytoplasmic side of the membrane. The chain crosses the membrane as a helical span at residues 222–242 (LWTFFTCLPYRLLYLFSIFCG). The Extracellular segment spans residues 243–254 (ETCQINNYYKTA). The chain crosses the membrane as a helical span at residues 255-275 (TNLFFRLLIVGIMINPVITIW). At 276-321 (TQRIYRLRLMRMFGRLRENSSTEVLMVSNRRASERPPEHTPLRCDM) the chain is on the cytoplasmic side.

It belongs to the G-protein coupled receptor 1 family. As to expression, expressed in the intestinal muscle, anal depressor, AVL and DVB GABAergic neurons, enteric muscles, the nerve ring, the ventral nerve cord and head mesodermal cells.

It is found in the cell membrane. The protein localises to the cell projection. The protein resides in the cilium. Functionally, G-protein coupled receptor for the nlp-40 neuropeptide. The activity of this receptor is mediated by G proteins which activate adenylyl cyclase. Plays a role in the defecation motor program, which is a coordinated series of three muscle contractions that occurs every 45 seconds. Specifically, acts in GABAergic neurons, such as AVL and DVB, to control the expulsion step of defecation. Required for fatty acid uptake and metabolism by intestinal cells and therefore regulates the levels of triglycerides in the intestine. In Caenorhabditis elegans, this protein is G-protein coupled receptor aex-2.